The chain runs to 429 residues: 3-phosphoshikimate 1-carboxyvinyltransferase (429 aa).

3 residues coordinate 3-phosphoshikimate: lysine 21, serine 22, and arginine 26. Lysine 21 contributes to the phosphoenolpyruvate binding site. Phosphoenolpyruvate is bound by residues glycine 94 and arginine 122. Serine 167, glutamine 169, aspartate 315, and lysine 342 together coordinate 3-phosphoshikimate. Glutamine 169 contacts phosphoenolpyruvate. Aspartate 315 functions as the Proton acceptor in the catalytic mechanism. Arginine 346 and arginine 388 together coordinate phosphoenolpyruvate.

It belongs to the EPSP synthase family. In terms of assembly, monomer.

Its subcellular location is the cytoplasm. The catalysed reaction is 3-phosphoshikimate + phosphoenolpyruvate = 5-O-(1-carboxyvinyl)-3-phosphoshikimate + phosphate. It functions in the pathway metabolic intermediate biosynthesis; chorismate biosynthesis; chorismate from D-erythrose 4-phosphate and phosphoenolpyruvate: step 6/7. Its function is as follows. Catalyzes the transfer of the enolpyruvyl moiety of phosphoenolpyruvate (PEP) to the 5-hydroxyl of shikimate-3-phosphate (S3P) to produce enolpyruvyl shikimate-3-phosphate and inorganic phosphate. This Desulforudis audaxviator (strain MP104C) protein is 3-phosphoshikimate 1-carboxyvinyltransferase.